A 375-amino-acid chain; its full sequence is PTS system fructose-specific EIIC component (375 aa).

A PTS EIIC type-2 domain is found at Val-16 to Ala-370. A run of 10 helical transmembrane segments spans residues Val-24–Val-44, Ile-68–Ile-88, Gly-93–Ala-113, Gly-122–Ala-142, Val-160–Gly-180, Ala-203–Asn-223, Val-238–Leu-258, Val-279–Ala-299, Val-301–Val-321, and Phe-340–Ile-360.

It localises to the cell membrane. The phosphoenolpyruvate-dependent sugar phosphotransferase system (sugar PTS), a major carbohydrate active transport system, catalyzes the phosphorylation of incoming sugar substrates concomitantly with their translocation across the cell membrane. The enzyme II PtfABC PTS system is involved in fructose transport. This is PTS system fructose-specific EIIC component from Haloferax volcanii (strain ATCC 29605 / DSM 3757 / JCM 8879 / NBRC 14742 / NCIMB 2012 / VKM B-1768 / DS2) (Halobacterium volcanii).